Reading from the N-terminus, the 251-residue chain is MDFTDQALVLRVGRFREADLWVRFLCRQRGIISAFAFGGCRSRRRFCGCLDIFNVVLMRVQGTRGGLYQSLQEATLLKGPDRLRRDWRRYGVAVNCLRFIEALGAGPDGADSAFTLTLEMLELLETVDVVPPLLPLLFRARFAFEQGYAPRFESCASCGEPFDGTAKDGGARFHVRDGVLYCGRCSAPTGATVAISRETLDALRFVQDNSPLRWSELCFSPTGRRECSRAVDGFIQYHIGLTWENGTFRRL.

Belongs to the RecO family.

Its function is as follows. Involved in DNA repair and RecF pathway recombination. The protein is DNA repair protein RecO of Nitratidesulfovibrio vulgaris (strain ATCC 29579 / DSM 644 / CCUG 34227 / NCIMB 8303 / VKM B-1760 / Hildenborough) (Desulfovibrio vulgaris).